Reading from the N-terminus, the 292-residue chain is Ribosomal protein L11 methyltransferase (292 aa).

Residues T144, G165, D187, and N229 each coordinate S-adenosyl-L-methionine.

This sequence belongs to the methyltransferase superfamily. PrmA family.

It localises to the cytoplasm. The enzyme catalyses L-lysyl-[protein] + 3 S-adenosyl-L-methionine = N(6),N(6),N(6)-trimethyl-L-lysyl-[protein] + 3 S-adenosyl-L-homocysteine + 3 H(+). Functionally, methylates ribosomal protein L11. The chain is Ribosomal protein L11 methyltransferase from Pseudomonas putida (strain ATCC 47054 / DSM 6125 / CFBP 8728 / NCIMB 11950 / KT2440).